Here is a 130-residue protein sequence, read N- to C-terminus: L-ectoine synthase (130 aa).

It belongs to the ectoine synthase family.

It catalyses the reaction (2S)-4-acetamido-2-aminobutanoate = L-ectoine + H2O. The protein operates within amine and polyamine biosynthesis; ectoine biosynthesis; L-ectoine from L-aspartate 4-semialdehyde: step 3/3. Its function is as follows. Catalyzes the circularization of gamma-N-acetyl-alpha,gamma-diaminobutyric acid (ADABA) to ectoine (1,4,5,6-tetrahydro-2-methyl-4-pyrimidine carboxylic acid), which is an excellent osmoprotectant. This is L-ectoine synthase from Mycolicibacterium gilvum (strain PYR-GCK) (Mycobacterium gilvum (strain PYR-GCK)).